We begin with the raw amino-acid sequence, 254 residues long: Persulfide dioxygenase ETHE1, mitochondrial (254 aa).

The transit peptide at 1-7 directs the protein to the mitochondrion; it reads MAEAVLR. 2 positions are modified to phosphoserine: serine 14 and serine 19. Lysine 66 is subject to N6-acetyllysine. Fe cation-binding residues include histidine 79, histidine 135, and aspartate 154. Position 172 is an N6-acetyllysine; alternate (lysine 172). At lysine 172 the chain carries N6-succinyllysine; alternate.

It belongs to the metallo-beta-lactamase superfamily. Glyoxalase II family. As to quaternary structure, homodimer. Monomer. Interacts with TST. May interact with RELA. Fe(2+) is required as a cofactor. Ubiquitously expressed.

It is found in the cytoplasm. Its subcellular location is the nucleus. The protein localises to the mitochondrion matrix. It carries out the reaction S-sulfanylglutathione + O2 + H2O = sulfite + glutathione + 2 H(+). Its activity is regulated as follows. Glutathione increases enzyme activity. In terms of biological role, sulfur dioxygenase that plays an essential role in hydrogen sulfide catabolism in the mitochondrial matrix. Hydrogen sulfide (H(2)S) is first oxidized by SQRDL, giving rise to cysteine persulfide residues. ETHE1 consumes molecular oxygen to catalyze the oxidation of the persulfide, once it has been transferred to a thiophilic acceptor, such as glutathione (R-SSH). Plays an important role in metabolic homeostasis in mitochondria by metabolizing hydrogen sulfide and preventing the accumulation of supraphysiological H(2)S levels that have toxic effects, due to the inhibition of cytochrome c oxidase. First described as a protein that can shuttle between the nucleus and the cytoplasm and suppress p53-induced apoptosis by sequestering the transcription factor RELA/NFKB3 in the cytoplasm and preventing its accumulation in the nucleus. In Homo sapiens (Human), this protein is Persulfide dioxygenase ETHE1, mitochondrial (ETHE1).